The chain runs to 119 residues: Protein yippee-like 3 (119 aa).

One can recognise a Yippee domain in the interval 19 to 116; it reads RRYSCAHCRA…IELNHMIKDN (98 aa). Residues Cys-23, Cys-26, Cys-79, and Cys-82 each coordinate Zn(2+).

Belongs to the yippee family. In terms of processing, probably ubiquitinated leading to its degradation by the proteasome.

Its subcellular location is the nucleus. The protein resides in the nucleolus. In terms of biological role, involved in proliferation and apoptosis in myeloid precursor cells. In Bos taurus (Bovine), this protein is Protein yippee-like 3 (YPEL3).